The primary structure comprises 97 residues: MTEREFVSVFRSSKKGDTYLFVRRGQKWDDLPEALRGIFGSPIHSMDLLLTPDKKLARTTGKEVLAAIEEKDFFLQMPEEQDTYIVDFKRKIEQHRK.

Positions 5–89 constitute a YcgL domain; sequence EFVSVFRSSK…EQDTYIVDFK (85 aa).

The polypeptide is YcgL domain-containing protein Maqu_1609 (Marinobacter nauticus (strain ATCC 700491 / DSM 11845 / VT8) (Marinobacter aquaeolei)).